The sequence spans 116 residues: Aspartate 1-decarboxylase (116 aa).

Serine 25 acts as the Schiff-base intermediate with substrate; via pyruvic acid in catalysis. At serine 25 the chain carries Pyruvic acid (Ser). Threonine 57 provides a ligand contact to substrate. Tyrosine 58 functions as the Proton donor in the catalytic mechanism. 73-75 (GAA) contacts substrate.

It belongs to the PanD family. Heterooctamer of four alpha and four beta subunits. It depends on pyruvate as a cofactor. In terms of processing, is synthesized initially as an inactive proenzyme, which is activated by self-cleavage at a specific serine bond to produce a beta-subunit with a hydroxyl group at its C-terminus and an alpha-subunit with a pyruvoyl group at its N-terminus.

The protein resides in the cytoplasm. The enzyme catalyses L-aspartate + H(+) = beta-alanine + CO2. It participates in cofactor biosynthesis; (R)-pantothenate biosynthesis; beta-alanine from L-aspartate: step 1/1. Its function is as follows. Catalyzes the pyruvoyl-dependent decarboxylation of aspartate to produce beta-alanine. This Parabacteroides distasonis (strain ATCC 8503 / DSM 20701 / CIP 104284 / JCM 5825 / NCTC 11152) protein is Aspartate 1-decarboxylase.